We begin with the raw amino-acid sequence, 336 residues long: Protein-glutamate methylesterase/protein-glutamine glutaminase 3 (336 aa).

One can recognise a Response regulatory domain in the interval 2–119 (KIAIVNDMPM…PNPREAAAPL (118 aa)). Residue Asp-53 is modified to 4-aspartylphosphate. Residues 147 to 336 (VSRRDRLVAI…APRLMEVFTQ (190 aa)) form the CheB-type methylesterase domain. Catalysis depends on residues Ser-159, His-186, and Asp-279.

Belongs to the CheB family. Phosphorylated by CheA. Phosphorylation of the N-terminal regulatory domain activates the methylesterase activity.

The protein resides in the cytoplasm. The enzyme catalyses [protein]-L-glutamate 5-O-methyl ester + H2O = L-glutamyl-[protein] + methanol + H(+). The catalysed reaction is L-glutaminyl-[protein] + H2O = L-glutamyl-[protein] + NH4(+). Functionally, involved in chemotaxis. Part of a chemotaxis signal transduction system that modulates chemotaxis in response to various stimuli. Catalyzes the demethylation of specific methylglutamate residues introduced into the chemoreceptors (methyl-accepting chemotaxis proteins or MCP) by CheR. Also mediates the irreversible deamidation of specific glutamine residues to glutamic acid. This Pseudomonas syringae pv. tomato (strain ATCC BAA-871 / DC3000) protein is Protein-glutamate methylesterase/protein-glutamine glutaminase 3.